An 867-amino-acid polypeptide reads, in one-letter code: Zinc finger protein zfp-1 (867 aa).

The segment at 5–57 adopts a PHD-type 1 zinc-finger fold; sequence VGGCCVCADENGWTDNPLIYCDGENCEVAVHQGCYGIQEVPEGEWFCAKCTKA. A C2HC pre-PHD-type 2 zinc finger spans residues 69 to 102; that stretch reads TFCCQLCPFDYGALKKTDRNGWAHVICALYIPEV. Positions 69–186 are extended PHD2 domain (ePHD2); that stretch reads TFCCQLCPFD…KYCGYCENHL (118 aa). The PHD-type 2 zinc-finger motif lies at 125–186; sequence KLCYICNEER…KYCGYCENHL (62 aa). Disordered stretches follow at residues 267–311, 440–477, 503–586, and 753–773; these read GSTV…SLSS, KNDMMDKTHKRPRANARPPAVLGSMSSGSSGGTVGKSP, ADRT…QSNR, and SSGAPVNSNIQNHRATPSTAG. Residues 285–311 show a composition bias toward polar residues; it reads PLTTSSRSSVAQDPSPPLTINKNSLSS. Over residues 503-512 the composition is skewed to basic and acidic residues; the sequence is ADRTAAERRA. Over residues 516-527 the composition is skewed to polar residues; that stretch reads QSQPSTSTNGGP. Positions 538 to 550 are enriched in low complexity; sequence HTNSTNSTNHQNN. Polar residues predominate over residues 551–573; that stretch reads GLTQNAPASTSMQAGTSSNDGVI. The span at 574–585 shows a compositional bias: low complexity; it reads SQNGTSSTSQSN. Polar residues predominate over residues 758–771; that stretch reads VNSNIQNHRATPST.

Multimer; in vitro. Interacts (via C-terminus) with dot-1.1 to form a heterodimer known as the zfp-1-dot-1.1 complex or DotCom complex. As to expression, isoform a: Expressed at high levels in maturing oocytes, but at low levels in the rest of the germ line (at protein level). Isoform a: Not expressed in the pharynx, germ line and tail. Isoform c: Not expressed in the germ line (at protein level). Isoform c: Uniformly expressed.

The protein localises to the nucleus. It is found in the chromosome. Recruits the histone methyltransferase dot-1.1 to chromatin to methylate 'Lys-79' of histone H3 and activate transcription. Recognizes and binds histone H3 methylated at 'Lys-4' (H3K4me) at the promoters of target genes. During stress, the zfp-1-dot-1.1 complex also plays a role in the deubiquitination of histone H2B sites, which negatively modulates the RNA polymerase II-induced transcription of highly expressed genes. In response to stress, binds to the pdk-1 promoter to negatively regulate pdk-1 expression, which negatively modulates daf-16/FOXO-mediated gene expression. Thus, most likely via this mechanism, in response to stress, it confers a protective role against neuronal necrosis. Plays a role in Insulin/IGF-1-like signaling (IIS)- and diet restriction-mediated lifespan extension by controlling daf-16/FOXO and pha-4/FOXA recruitment to target promoters. May negatively regulate the expression of genes required for vulval development. May play a role in axon guidance in D-type motor neurons. May suppress sensitivity to RNAi. In terms of biological role, required for migration of HSN motor neurons during embryogenesis. The chain is Zinc finger protein zfp-1 from Caenorhabditis elegans.